Consider the following 827-residue polypeptide: Lon protease (827 aa).

Positions 1–27 are disordered; that stretch reads MNDETLREQTTAESEETSPTTPSPEPE. The 194-residue stretch at 32-225 folds into the Lon N-terminal domain; it reads LPLIPLEGAV…KVLMFYRKQF (194 aa). Position 385–392 (385–392) interacts with ATP; sequence GPPGVGKT. Residues 625–806 enclose the Lon proteolytic domain; the sequence is IDQPGVAIGL…DEVLSIALLP (182 aa). Catalysis depends on residues S712 and K755.

It belongs to the peptidase S16 family. Homohexamer. Organized in a ring with a central cavity.

The protein localises to the cytoplasm. It catalyses the reaction Hydrolysis of proteins in presence of ATP.. Functionally, ATP-dependent serine protease that mediates the selective degradation of mutant and abnormal proteins as well as certain short-lived regulatory proteins. Required for cellular homeostasis and for survival from DNA damage and developmental changes induced by stress. Degrades polypeptides processively to yield small peptide fragments that are 5 to 10 amino acids long. Binds to DNA in a double-stranded, site-specific manner. In Chloroflexus aurantiacus (strain ATCC 29366 / DSM 635 / J-10-fl), this protein is Lon protease.